The chain runs to 1325 residues: Nonribosomal peptide synthetase (1325 aa).

The adenylation stretch occupies residues 248 to 644 (YQQLDRLSTR…LGEIEYQIQQ (397 aa)). Residues 779–856 (EIVNPGEITL…DQARLLRPLS (78 aa)) enclose the Carrier domain. Position 816 is an O-(pantetheine 4'-phosphoryl)serine (serine 816). Positions 893–1310 (EDVYPCTPLQ…DDYSTTLHTL (418 aa)) are condensation.

The protein belongs to the NRP synthetase family. Pantetheine 4'-phosphate is required as a cofactor.

The protein operates within antifungal biosynthesis. Functionally, nonribosomal peptide synthetase; part of the gene cluster that mediates the biosynthesis of the tetrahydropyranyl antifungal agent lanomycin that acts as an inhibitor of CYP51 and blocks the ergosterol biosynthesis. The biosynthesis probably begins with the formation of an hexaketide, followed by methionine mediated alkylation of C-2 and C-6, and methylation of the reduced C-3 oxygen, pyran forming reductive ring closure, oxygenation of C-4, beta-keto reduction, enoyl reduction and dehydration of the remaining oxygens, and finally, acylation with glycine to complete the biosynthesis. This Pyrenophora dematioidea (Helminthosporium dematioideum) protein is Nonribosomal peptide synthetase.